The primary structure comprises 34 residues: Protamine-Z1/Z2 (34 aa).

Residues 1–34 (PRRRRRSSRPVRRRRRYRRSTVARRRRRVVRRRR) are disordered.

In terms of tissue distribution, testis.

The protein resides in the nucleus. The protein localises to the chromosome. In terms of biological role, protamines substitute for histones in the chromatin of sperm during the haploid phase of spermatogenesis. They compact sperm DNA into a highly condensed, stable and inactive complex. This is Protamine-Z1/Z2 from Thunnus thynnus (Atlantic bluefin tuna).